The primary structure comprises 651 residues: Peptidoglycan D,D-transpeptidase MrdA (651 aa).

Residues 30-50 (LVAFLGILLLTGVLFTNIYQL) form a helical membrane-spanning segment. The active-site Acyl-ester intermediate is the Ser-338.

This sequence belongs to the transpeptidase family. MrdA subfamily.

Its subcellular location is the cell inner membrane. The catalysed reaction is Preferential cleavage: (Ac)2-L-Lys-D-Ala-|-D-Ala. Also transpeptidation of peptidyl-alanyl moieties that are N-acyl substituents of D-alanine.. It functions in the pathway cell wall biogenesis; peptidoglycan biosynthesis. Its function is as follows. Catalyzes cross-linking of the peptidoglycan cell wall. This chain is Peptidoglycan D,D-transpeptidase MrdA, found in Haemophilus influenzae (strain ATCC 51907 / DSM 11121 / KW20 / Rd).